The following is a 159-amino-acid chain: uncharacterized protein (159 aa).

Disordered stretches follow at residues methionine 1–serine 29 and threonine 114–threonine 159. The span at serine 15–serine 29 shows a compositional bias: polar residues.

This is an uncharacterized protein from Homo sapiens (Human).